Here is a 323-residue protein sequence, read N- to C-terminus: Methionyl-tRNA formyltransferase (323 aa).

Position 121–124 (121–124) interacts with (6S)-5,6,7,8-tetrahydrofolate; it reads SLLP.

This sequence belongs to the Fmt family.

It catalyses the reaction L-methionyl-tRNA(fMet) + (6R)-10-formyltetrahydrofolate = N-formyl-L-methionyl-tRNA(fMet) + (6S)-5,6,7,8-tetrahydrofolate + H(+). Attaches a formyl group to the free amino group of methionyl-tRNA(fMet). The formyl group appears to play a dual role in the initiator identity of N-formylmethionyl-tRNA by promoting its recognition by IF2 and preventing the misappropriation of this tRNA by the elongation apparatus. In Desulfotalea psychrophila (strain LSv54 / DSM 12343), this protein is Methionyl-tRNA formyltransferase.